Consider the following 295-residue polypeptide: Hepatic leukemia factor (295 aa).

The segment covering 37-52 has biased composition (basic and acidic residues); it reads EDAFSKDKDKEKKLDD. Disordered regions lie at residues 37–70 and 93–167; these read EDAF…PTLW and SENG…IDPD. In terms of domain architecture, bZIP spans 225 to 288; sequence DDKYWARRRK…GKCKNILAKY (64 aa). The segment at 227–247 is basic motif; the sequence is KYWARRRKNNMAAKRSRDARR. The tract at residues 248–255 is leucine-zipper; it reads LKENQIAI.

The protein belongs to the bZIP family. PAR subfamily. In terms of assembly, binds DNA specifically as homodimer or heterodimer with other PAR factors. In terms of tissue distribution, highly expressed in liver; lower levels in lung and kidney.

The protein localises to the nucleus. The chain is Hepatic leukemia factor (HLF) from Homo sapiens (Human).